A 695-amino-acid chain; its full sequence is Interleukin-1 receptor accessory protein-like 1 (695 aa).

A signal peptide spans 1 to 24 (MKAPIPHLILLYATFTQSLKVVTK). The 110-residue stretch at 25–134 (RGSADGCTDW…YCMKVSISLT (110 aa)) folds into the Ig-like C2-type 1 domain. The Extracellular portion of the chain corresponds to 25-357 (RGSADGCTDW…LLHKRELMYT (333 aa)). 2 cysteine pairs are disulfide-bonded: Cys-31-Cys-126 and Cys-53-Cys-118. Asn-63, Asn-122, and Asn-138 each carry an N-linked (GlcNAc...) asparagine glycan. 2 disulfides stabilise this stretch: Cys-143–Cys-185 and Cys-164–Cys-216. 2 Ig-like C2-type domains span residues 143–232 (CYNS…TELT) and 242–350 (PKLL…VLLH). 3 N-linked (GlcNAc...) asparagine glycosylation sites follow: Asn-213, Asn-264, and Asn-331. Cys-267 and Cys-334 are oxidised to a cystine. The chain crosses the membrane as a helical span at residues 358–378 (VELAGGLGAILLLLICSVTIY). The Cytoplasmic segment spans residues 379 to 695 (KCYKIEIMLF…RETSISSVIW (317 aa)). The TIR domain occupies 403-558 (KDYDAYLSYT…KFWKRLQYEM (156 aa)). Glu-490 is an active-site residue. The tract at residues 548 to 643 (SKFWKRLQYE…TGTLPLTSIG (96 aa)) is interaction with NCS1. Positions 657 to 679 (NGQRPQTKSNREPNPDEAHTNSA) are disordered. Residues 665–675 (SNREPNPDEAH) are compositionally biased toward basic and acidic residues.

Belongs to the interleukin-1 receptor family. In terms of assembly, homodimer. Interacts (calcium-independent) with NCS1/FREQ. Interacts (via the first immunoglobilin domain) with PTPRD (via the second immunoglobilin domain); this interaction is PTPRD-splicing-dependent and induces pre- and post-synaptic differentiation of neurons and is required for IL1RAPL1-mediated synapse formation. In terms of tissue distribution, detected in total brain extracts, olfactory bulb, hippocampus and striatum (at protein level).

The protein resides in the cell membrane. It is found in the cytoplasm. It localises to the cell projection. The protein localises to the axon. Its subcellular location is the dendrite. The enzyme catalyses NAD(+) + H2O = ADP-D-ribose + nicotinamide + H(+). Its function is as follows. May regulate secretion and presynaptic differentiation through inhibition of the activity of N-type voltage-gated calcium channel. May activate the MAP kinase JNK. Plays a role in neurite outgrowth. During dendritic spine formation can bidirectionally induce pre- and post-synaptic differentiation of neurons by trans-synaptically binding to PTPRD. The polypeptide is Interleukin-1 receptor accessory protein-like 1 (Il1rapl1) (Mus musculus (Mouse)).